The following is a 77-amino-acid chain: EMBRYO SURROUNDING FACTOR 1-like protein 6 (77 aa).

An N-terminal signal peptide occupies residues 1–25 (MSPSHFAILFIIVISLVPLHGYANG). 4 disulfides stabilise this stretch: cysteine 38/cysteine 53, cysteine 43/cysteine 72, cysteine 51/cysteine 68, and cysteine 54/cysteine 61.

It belongs to the MEG family.

This Arabidopsis thaliana (Mouse-ear cress) protein is EMBRYO SURROUNDING FACTOR 1-like protein 6 (ESFL6).